A 138-amino-acid polypeptide reads, in one-letter code: Vesicle transport protein GOT1B (138 aa).

An N-acetylmethionine modification is found at methionine 1. At 1–9 the chain is on the cytoplasmic side; it reads MISLTDTQK. The chain crosses the membrane as a helical span at residues 10 to 30; that stretch reads IGMGLTGFGVFFLFFGMILFF. At 31–32 the chain is on the lumenal side; sequence DK. The chain crosses the membrane as a helical span at residues 33 to 53; the sequence is ALLAIGNVLFVAGLAFVIGLE. Over 54 to 68 the chain is Cytoplasmic; it reads RTFRFFFQKHKMKAT. A helical membrane pass occupies residues 69–89; the sequence is GFFLGGVFVVLIGWPLIGMIF. A topological domain (lumenal) is located at residue glutamate 90. The chain crosses the membrane as a helical span at residues 91 to 109; that stretch reads IYGFFLLFRGFFPVVVGFI. Residues 110–138 are Cytoplasmic-facing; it reads RRVPVLGSLLNLPGIRSFVDKVGESNNMV.

This sequence belongs to the GOT1 family.

The protein localises to the golgi apparatus membrane. Functionally, may be involved in fusion of ER-derived transport vesicles with the Golgi complex. In Bos taurus (Bovine), this protein is Vesicle transport protein GOT1B.